The primary structure comprises 424 residues: UDP-N-acetylglucosamine 1-carboxyvinyltransferase (424 aa).

22–23 is a binding site for phosphoenolpyruvate; sequence KN. Position 93 (R93) interacts with UDP-N-acetyl-alpha-D-glucosamine. Catalysis depends on C117, which acts as the Proton donor. A 2-(S-cysteinyl)pyruvic acid O-phosphothioketal modification is found at C117. UDP-N-acetyl-alpha-D-glucosamine contacts are provided by residues 162–165, D307, and I329; that span reads KVSV.

Belongs to the EPSP synthase family. MurA subfamily.

It localises to the cytoplasm. The catalysed reaction is phosphoenolpyruvate + UDP-N-acetyl-alpha-D-glucosamine = UDP-N-acetyl-3-O-(1-carboxyvinyl)-alpha-D-glucosamine + phosphate. Its pathway is cell wall biogenesis; peptidoglycan biosynthesis. Functionally, cell wall formation. Adds enolpyruvyl to UDP-N-acetylglucosamine. The sequence is that of UDP-N-acetylglucosamine 1-carboxyvinyltransferase from Actinobacillus pleuropneumoniae serotype 5b (strain L20).